The following is a 260-amino-acid chain: Creatinine amidohydrolase (260 aa).

Position 34 (E34) interacts with Mn(2+). Positions 34, 36, and 45 each coordinate Zn(2+). Position 45 (D45) interacts with Mn(2+). S78 provides a ligand contact to creatine. H120 contributes to the Mn(2+) binding site. H120 lines the Zn(2+) pocket. Residues Y121, W174, D175, and H178 each contribute to the creatine site. Zn(2+) is bound at residue E183.

It belongs to the creatininase superfamily. In terms of assembly, homohexamer; trimer of dimers. It depends on Zn(2+) as a cofactor. The cofactor is Mn(2+).

The enzyme catalyses creatinine + H2O = creatine. It functions in the pathway amine and polyamine degradation; creatinine degradation. Is markedly inactivated in vitro by heavy metal ions, N-bromosuccinimide, ethoxyformic anhydride, and dye-sensitized photooxidation. In terms of biological role, cyclic amidohydrolase that catalyzes the reversible conversion of creatinine to creatine. Is also active toward glycocyamidine, though the reaction rate is very low, but it is completely inert toward hydantoin and its derivatives. The polypeptide is Creatinine amidohydrolase (crnA) (Pseudomonas putida (Arthrobacter siderocapsulatus)).